The chain runs to 168 residues: Peptidyl-prolyl cis-trans isomerase-like 3 (168 aa).

The 156-residue stretch at 1–156 (MSVTLHTNVG…SEIRMTGVTV (156 aa)) folds into the PPIase cyclophilin-type domain.

The protein belongs to the cyclophilin-type PPIase family. PPIL3 subfamily.

It catalyses the reaction [protein]-peptidylproline (omega=180) = [protein]-peptidylproline (omega=0). In terms of biological role, PPIases accelerate the folding of proteins. It catalyzes the cis-trans isomerization of proline imidic peptide bonds in oligopeptides. The polypeptide is Peptidyl-prolyl cis-trans isomerase-like 3 (CYP10) (Mycosarcoma maydis (Corn smut fungus)).